The sequence spans 308 residues: Membrane protein insertase YidC 1 (308 aa).

Positions 1 to 22 are cleaved as a signal peptide; sequence MKSIKRFALSAMGVAMLLVLTG. Cys-23 is lipidated: N-palmitoyl cysteine. Cys-23 is lipidated: S-diacylglycerol cysteine. 5 helical membrane-spanning segments follow: residues 60–80, 135–155, 168–188, 211–226, and 232–252; these read FGVA…PLGI, FGGV…AIYF, YLGI…GVLY, MIYM…SLFS, and LYWV…NYIV. Positions 263–308 are disordered; it reads ELAKNPPKASAFSKPSGRKDVTPEQPTAITSKKKHKNRNAGKQRSR. Basic residues predominate over residues 293–308; that stretch reads SKKKHKNRNAGKQRSR.

It belongs to the OXA1/ALB3/YidC family. Type 2 subfamily.

The protein resides in the cell membrane. In terms of biological role, required for the insertion and/or proper folding and/or complex formation of integral membrane proteins into the membrane. Involved in integration of membrane proteins that insert both dependently and independently of the Sec translocase complex, as well as at least some lipoproteins. The sequence is that of Membrane protein insertase YidC 1 from Streptococcus pneumoniae serotype 4 (strain ATCC BAA-334 / TIGR4).